A 591-amino-acid chain; its full sequence is V-type ATP synthase alpha chain (591 aa).

Position 233-240 (233-240) interacts with ATP; the sequence is GPFGAGKT.

Belongs to the ATPase alpha/beta chains family.

The enzyme catalyses ATP + H2O + 4 H(+)(in) = ADP + phosphate + 5 H(+)(out). Functionally, produces ATP from ADP in the presence of a proton gradient across the membrane. The V-type alpha chain is a catalytic subunit. The sequence is that of V-type ATP synthase alpha chain from Streptococcus pyogenes serotype M3 (strain ATCC BAA-595 / MGAS315).